A 141-amino-acid chain; its full sequence is Large ribosomal subunit protein uL11 (141 aa).

It belongs to the universal ribosomal protein uL11 family. Part of the ribosomal stalk of the 50S ribosomal subunit. Interacts with L10 and the large rRNA to form the base of the stalk. L10 forms an elongated spine to which L12 dimers bind in a sequential fashion forming a multimeric L10(L12)X complex. One or more lysine residues are methylated.

Functionally, forms part of the ribosomal stalk which helps the ribosome interact with GTP-bound translation factors. The sequence is that of Large ribosomal subunit protein uL11 from Opitutus terrae (strain DSM 11246 / JCM 15787 / PB90-1).